We begin with the raw amino-acid sequence, 774 residues long: Subtilisin-like protease SBT3.5 (774 aa).

A signal peptide spans 1–23 (MRNCRVLLVLVLSLVIVLNVVRA). A propeptide spans 24–108 (SDESKVHIVY…VMADSFYELA (85 aa)) (removed in mature form). The region spanning 29 to 108 (VHIVYLGEKQ…VMADSFYELA (80 aa)) is the Inhibitor I9 domain. The region spanning 112–621 (TWDYLGLSVA…GGIVNPEKAA (510 aa)) is the Peptidase S8 domain. An N-linked (GlcNAc...) asparagine glycan is attached at asparagine 128. Aspartate 142 acts as the Charge relay system in catalysis. Asparagine 201 carries N-linked (GlcNAc...) asparagine glycosylation. Histidine 217 acts as the Charge relay system in catalysis. Residues asparagine 232, asparagine 394, asparagine 409, and asparagine 539 are each glycosylated (N-linked (GlcNAc...) asparagine). Positions 383–478 (SLVYPENAGF…ELGTDVLLYI (96 aa)) constitute a PA domain. Serine 552 (charge relay system) is an active-site residue. Asparagine 644, asparagine 654, asparagine 725, and asparagine 755 each carry an N-linked (GlcNAc...) asparagine glycan.

This sequence belongs to the peptidase S8 family. In terms of tissue distribution, expressed in roots, leaves, stems, flower buds, developing siliques and mature seeds.

The protein resides in the secreted. The protein localises to the cell wall. Its function is as follows. Serine protease that cleaves the pectin methylesterase 17 (PME17) protein to release the PME17 mature form in the apoplasm. This chain is Subtilisin-like protease SBT3.5, found in Arabidopsis thaliana (Mouse-ear cress).